A 586-amino-acid polypeptide reads, in one-letter code: Phosphomethylpyrimidine synthase (586 aa).

Positions 1–58 (MKQSVSAEQIELKSSLPGSKKVYVDGTREGMKVPMREIEQSDTNGVQNPPIRVYDTSG) are disordered. A compositionally biased stretch (basic and acidic residues) spans 22-39 (VYVDGTREGMKVPMREIE). Substrate is bound by residues asparagine 193, methionine 222, tyrosine 251, histidine 287, 307 to 309 (SRG), 348 to 351 (DGLR), and glutamate 387. Zn(2+) is bound at residue histidine 391. Tyrosine 414 is a substrate binding site. Histidine 455 contributes to the Zn(2+) binding site. The [4Fe-4S] cluster site is built by cysteine 535, cysteine 538, and cysteine 543.

It belongs to the ThiC family. [4Fe-4S] cluster serves as cofactor.

The enzyme catalyses 5-amino-1-(5-phospho-beta-D-ribosyl)imidazole + S-adenosyl-L-methionine = 4-amino-2-methyl-5-(phosphooxymethyl)pyrimidine + CO + 5'-deoxyadenosine + formate + L-methionine + 3 H(+). It functions in the pathway cofactor biosynthesis; thiamine diphosphate biosynthesis. Its function is as follows. Catalyzes the synthesis of the hydroxymethylpyrimidine phosphate (HMP-P) moiety of thiamine from aminoimidazole ribotide (AIR) in a radical S-adenosyl-L-methionine (SAM)-dependent reaction. In Bacillus mycoides (strain KBAB4) (Bacillus weihenstephanensis), this protein is Phosphomethylpyrimidine synthase.